The sequence spans 149 residues: Large ribosomal subunit protein uL13 (149 aa).

The protein belongs to the universal ribosomal protein uL13 family. Part of the 50S ribosomal subunit.

In terms of biological role, this protein is one of the early assembly proteins of the 50S ribosomal subunit, although it is not seen to bind rRNA by itself. It is important during the early stages of 50S assembly. This is Large ribosomal subunit protein uL13 from Thermobifida fusca (strain YX).